Reading from the N-terminus, the 356-residue chain is UDP-N-acetylglucosamine--N-acetylmuramyl-(pentapeptide) pyrophosphoryl-undecaprenol N-acetylglucosamine transferase (356 aa).

UDP-N-acetyl-alpha-D-glucosamine is bound by residues 15 to 17 (TGG), Asn127, Arg163, Ser191, Ile244, 263 to 268 (ALTVSE), and Gln288.

This sequence belongs to the glycosyltransferase 28 family. MurG subfamily.

The protein localises to the cell inner membrane. The catalysed reaction is di-trans,octa-cis-undecaprenyl diphospho-N-acetyl-alpha-D-muramoyl-L-alanyl-D-glutamyl-meso-2,6-diaminopimeloyl-D-alanyl-D-alanine + UDP-N-acetyl-alpha-D-glucosamine = di-trans,octa-cis-undecaprenyl diphospho-[N-acetyl-alpha-D-glucosaminyl-(1-&gt;4)]-N-acetyl-alpha-D-muramoyl-L-alanyl-D-glutamyl-meso-2,6-diaminopimeloyl-D-alanyl-D-alanine + UDP + H(+). Its pathway is cell wall biogenesis; peptidoglycan biosynthesis. In terms of biological role, cell wall formation. Catalyzes the transfer of a GlcNAc subunit on undecaprenyl-pyrophosphoryl-MurNAc-pentapeptide (lipid intermediate I) to form undecaprenyl-pyrophosphoryl-MurNAc-(pentapeptide)GlcNAc (lipid intermediate II). This Yersinia pseudotuberculosis serotype O:1b (strain IP 31758) protein is UDP-N-acetylglucosamine--N-acetylmuramyl-(pentapeptide) pyrophosphoryl-undecaprenol N-acetylglucosamine transferase.